A 147-amino-acid polypeptide reads, in one-letter code: Large ribosomal subunit protein uL11 (147 aa).

It belongs to the universal ribosomal protein uL11 family. As to quaternary structure, part of the ribosomal stalk of the 50S ribosomal subunit. Interacts with L10 and the large rRNA to form the base of the stalk. L10 forms an elongated spine to which L12 dimers bind in a sequential fashion forming a multimeric L10(L12)X complex. One or more lysine residues are methylated.

Functionally, forms part of the ribosomal stalk which helps the ribosome interact with GTP-bound translation factors. The sequence is that of Large ribosomal subunit protein uL11 from Parabacteroides distasonis (strain ATCC 8503 / DSM 20701 / CIP 104284 / JCM 5825 / NCTC 11152).